The sequence spans 153 residues: Probable trafficking protein particle complex subunit 2 (153 aa).

The protein belongs to the TRAPP small subunits family. Sedlin subfamily. In terms of assembly, part of the multisubunit TRAPP (transport protein particle) complex.

Its subcellular location is the cytoplasm. It is found in the perinuclear region. The protein localises to the endoplasmic reticulum. The protein resides in the golgi apparatus. Its function is as follows. May play a role in vesicular transport from endoplasmic reticulum to Golgi. This Nematostella vectensis (Starlet sea anemone) protein is Probable trafficking protein particle complex subunit 2.